Here is a 113-residue protein sequence, read N- to C-terminus: Colicin-E1 immunity protein (113 aa).

Functionally, this protein is able to protect a cell, which harbors the plasmid ColE1 encoding colicin E1, against colicin E1. This is Colicin-E1 immunity protein (imm) from Escherichia coli.